The chain runs to 416 residues: UDP-N-acetylglucosamine 1-carboxyvinyltransferase (416 aa).

22 to 23 contacts phosphoenolpyruvate; sequence KN. Arg-91 contacts UDP-N-acetyl-alpha-D-glucosamine. The active-site Proton donor is Cys-115. Cys-115 carries the 2-(S-cysteinyl)pyruvic acid O-phosphothioketal modification. Residues 120-124, Asp-303, and Ile-325 each bind UDP-N-acetyl-alpha-D-glucosamine; that span reads RPIDL.

The protein belongs to the EPSP synthase family. MurA subfamily.

The protein localises to the cytoplasm. The enzyme catalyses phosphoenolpyruvate + UDP-N-acetyl-alpha-D-glucosamine = UDP-N-acetyl-3-O-(1-carboxyvinyl)-alpha-D-glucosamine + phosphate. The protein operates within cell wall biogenesis; peptidoglycan biosynthesis. Functionally, cell wall formation. Adds enolpyruvyl to UDP-N-acetylglucosamine. This chain is UDP-N-acetylglucosamine 1-carboxyvinyltransferase, found in Lawsonia intracellularis (strain PHE/MN1-00).